A 442-amino-acid chain; its full sequence is Phosphoglucosamine mutase (442 aa).

Ser103 serves as the catalytic Phosphoserine intermediate. The Mg(2+) site is built by Ser103, Asp241, Asp243, and Asp245. A Phosphoserine modification is found at Ser103.

Belongs to the phosphohexose mutase family. The cofactor is Mg(2+). Post-translationally, activated by phosphorylation.

The catalysed reaction is alpha-D-glucosamine 1-phosphate = D-glucosamine 6-phosphate. Functionally, catalyzes the conversion of glucosamine-6-phosphate to glucosamine-1-phosphate. The chain is Phosphoglucosamine mutase from Deinococcus deserti (strain DSM 17065 / CIP 109153 / LMG 22923 / VCD115).